A 3914-amino-acid chain; its full sequence is Trichosetin synthetase PKS-NRPS1 (3914 aa).

Positions 4-420 (NEPIAIIGSA…GTNAHAIIEA (417 aa)) constitute a Ketosynthase family 3 (KS3) domain. Residues cysteine 177, histidine 301, and histidine 340 each act as for beta-ketoacyl synthase activity in the active site. The malonyl-CoA:ACP transacylase (MAT) domain stretch occupies residues 525 to 847 (VLTGQGAQWP…REKDDIQQFA (323 aa)). The segment at 913-1047 (HPILGRRCHD…AHVKASLSVP (135 aa)) is N-terminal hotdog fold. The tract at residues 913 to 1214 (HPILGRRCHD…MELVPFSPAT (302 aa)) is dehydratase (DH) domain. One can recognise a PKS/mFAS DH domain in the interval 913–1216 (HPILGRRCHD…LVPFSPATPE (304 aa)). Histidine 946 serves as the catalytic Proton acceptor; for dehydratase activity. A C-terminal hotdog fold region spans residues 1062–1216 (LRKVEVDRFY…LVPFSPATPE (155 aa)). Aspartate 1122 (proton donor; for dehydratase activity) is an active-site residue. Residues 1364 to 1593 (EGFGLDLVNK…DLPETKSTEL (230 aa)) are methyltransferase (MT) domain. Positions 2083 to 2255 (TFLLIGLSGE…VAASSIDISS (173 aa)) are ketoreductase (KR) domain. The Carrier 1 domain maps to 2356-2436 (LADVKTKADA…DLIEESLNLI (81 aa)). Position 2396 is an O-(pantetheine 4'-phosphoryl)serine (serine 2396). Positions 2447–2518 (EAGSTPTTQP…DSTDNSTPLK (72 aa)) are disordered. Polar residues predominate over residues 2481 to 2500 (QQTGSDSSRSPIDTPLTSME). Positions 2529–2956 (SYGQAGFWFL…VQGTNKAADT (428 aa)) are condensation (C) domain. Residues 2991 to 3388 (QTIQANSTKV…LLFCDGRLED (398 aa)) form an adenylation (A) (KR) domain region. Residues 3502-3579 (GTLTVAEQRL…TMAVVLESCG (78 aa)) form the Carrier 2 domain. Serine 3539 carries the post-translational modification O-(pantetheine 4'-phosphoryl)serine. Residues 3615 to 3831 (LTGSAGYLGR…VLPTGDIVKA (217 aa)) are reductase (RED) domain.

It in the C-terminal section; belongs to the NRP synthetase family.

It carries out the reaction L-serine + 7 malonyl-CoA + acetyl-CoA + 2 S-adenosyl-L-methionine + ATP + 8 NADPH + 11 H(+) = (5S)-3-[(2E,6R,8E,10E,12E)-2,6-dimethyltetradeca-2,8,10,12-tetraenoyl]-5-(hydroxymethyl)pyrrolidine-2,4-dione + AMP + 2 S-adenosyl-L-homocysteine + 7 CO2 + diphosphate + 8 NADP(+) + 8 CoA + 6 H2O. It functions in the pathway mycotoxin biosynthesis. Functionally, hybrid PKS-NRPS synthetase; part of the gene cluster that mediates the biosynthesis of trichosetin, a trans-fused decalin-containing tetramic acid with antimicrobial activity. The PKS module of PKS-NRPS1 together with the enoylreductase (ER) catalyze the formation of the polyketide unit which is then conjugated to L-serine by the condensation domain of the PKS-NRPS1 NRPS module. Activity of the Dieckmann cyclase domain (RED) results in release of the Dieckmann product intermediate. Diels-Alderase (DA) is involved in endo-selective Diels-Alder cycloaddition to form the decalin ring, leading to the production of N-desmethylequisetin also called trichosetin. The cluster does not contain the equisetin N-methyltransferase and consequently, trichosetin is isolated as final product. The sequence is that of Trichosetin synthetase PKS-NRPS1 from Gibberella fujikuroi (strain CBS 195.34 / IMI 58289 / NRRL A-6831) (Bakanae and foot rot disease fungus).